Here is a 244-residue protein sequence, read N- to C-terminus: NAD(P)H-quinone oxidoreductase subunit K (244 aa).

[4Fe-4S] cluster is bound by residues C51, C52, C116, and C147.

Belongs to the complex I 20 kDa subunit family. NDH-1 can be composed of about 15 different subunits; different subcomplexes with different compositions have been identified which probably have different functions. [4Fe-4S] cluster is required as a cofactor.

It is found in the cellular thylakoid membrane. The enzyme catalyses a plastoquinone + NADH + (n+1) H(+)(in) = a plastoquinol + NAD(+) + n H(+)(out). It carries out the reaction a plastoquinone + NADPH + (n+1) H(+)(in) = a plastoquinol + NADP(+) + n H(+)(out). In terms of biological role, NDH-1 shuttles electrons from an unknown electron donor, via FMN and iron-sulfur (Fe-S) centers, to quinones in the respiratory and/or the photosynthetic chain. The immediate electron acceptor for the enzyme in this species is believed to be plastoquinone. Couples the redox reaction to proton translocation, and thus conserves the redox energy in a proton gradient. Cyanobacterial NDH-1 also plays a role in inorganic carbon-concentration. The sequence is that of NAD(P)H-quinone oxidoreductase subunit K from Synechococcus sp. (strain JA-2-3B'a(2-13)) (Cyanobacteria bacterium Yellowstone B-Prime).